Reading from the N-terminus, the 338-residue chain is MKLPLTFCRLLSRLNRFSVKASPPVSFSTFSYLCSQKKKNSYEAVDQAKYSRLVRSVLSRGPAQTPESLFKEDDVLYGPVSKHKAAEPEPQARVPQHCFPIFNEERTGKPHTDASSSPLKIPLQRNSIPSVTRILQQTMPPEQSFFLERWKERMVLELGEDGFAEYTSNVFLQGKQFHKALESILSPQENLTGGEEHPQCGYIESIQHILTEISGVQALESAVQHEALKYVGLLDCVAEYRGKLCVIDWKTSEKPKPLIRNTYDNPLQVVAYMGAVNHDAHYSFQVQCGLIVVAYKDGSPAHPHFMDEELCSKYWAKWLLRLEEYTEKQKNLSAPEPA.

The transit peptide at 1–64 (MKLPLTFCRL…RSVLSRGPAQ (64 aa)) directs the protein to the mitochondrion. Active-site residues include aspartate 235, aspartate 248, and lysine 250.

It belongs to the MGME1 family.

It localises to the mitochondrion. Its function is as follows. Metal-dependent single-stranded DNA (ssDNA) exonuclease involved in mitochondrial genome maintenance. Has preference for 5'-3' exonuclease activity but is also capable of endonuclease activity on linear substrates. Necessary for maintenance of proper 7S DNA levels. Probably involved in mitochondrial DNA (mtDNA) repair, possibly via the processing of displaced DNA containing Okazaki fragments during RNA-primed DNA synthesis on the lagging strand or via processing of DNA flaps during long-patch base excision repair. Specifically binds 5-hydroxymethylcytosine (5hmC)-containing DNA in stem cells. This is Mitochondrial genome maintenance exonuclease 1 (Mgme1) from Mus musculus (Mouse).